A 360-amino-acid chain; its full sequence is D-alanine--D-alanine ligase (360 aa).

Positions 134-343 (KILAQRVGVP…YTELITRLIQ (210 aa)) constitute an ATP-grasp domain. 169–224 (AEKLGHDMFVKPSNQGSSVGVNHVTNAEEYAAALEEAFKYDDKVLVEETVPGTEVE) lines the ATP pocket. The Mg(2+) site is built by D297, E310, and N312.

This sequence belongs to the D-alanine--D-alanine ligase family. Mg(2+) is required as a cofactor. Requires Mn(2+) as cofactor.

It localises to the cytoplasm. The enzyme catalyses 2 D-alanine + ATP = D-alanyl-D-alanine + ADP + phosphate + H(+). Its pathway is cell wall biogenesis; peptidoglycan biosynthesis. Functionally, cell wall formation. The chain is D-alanine--D-alanine ligase from Lactobacillus acidophilus (strain ATCC 700396 / NCK56 / N2 / NCFM).